The following is a 424-amino-acid chain: MAKNIQAIRGMNDYLPGETAIWQRIEGTLKNVLGSYGYSEIRLPIVEQTPLFKRAIGEVTDVVEKEMYTFEDRNGDSLTLRPEGTAGCVRAGIEHGLLYNQEQRLWYIGPMFRHERPQKGRYRQFHQLGCEVFGLQGPDIDAELIMLTARWWRALGISEHVTLELNSIGSLEARANYRDALVAFLEQHKEKLDEDCKRRMYTNPLRVLDSKNPEVQVLLNDAPALGDYLDEESREHFAGLCKLLESAGIAYTVNQRLVRGLDYYNRTVFEWVTNSLGSQGTVCAGGRYDGLVEQLGGRATPAVGFAMGLERLVLLVQAVNPEFKADPVVDIYLVASGADTQSAAMALAERLRDELPGVKLMTNHGGGNFKKQFARADKWGARVAVVLGESEVANGTAVVKDLRSGEQTAVAQDSVAAHLRTLLG.

This sequence belongs to the class-II aminoacyl-tRNA synthetase family. Homodimer.

The protein localises to the cytoplasm. The enzyme catalyses tRNA(His) + L-histidine + ATP = L-histidyl-tRNA(His) + AMP + diphosphate + H(+). The sequence is that of Histidine--tRNA ligase from Escherichia coli O127:H6 (strain E2348/69 / EPEC).